Reading from the N-terminus, the 241-residue chain is Uridylate kinase (241 aa).

Position 15-18 (15-18 (KLSG)) interacts with ATP. The tract at residues 23-28 (GTEGFG) is involved in allosteric activation by GTP. G57 lines the UMP pocket. ATP is bound by residues G58 and R62. UMP-binding positions include D77 and 138–145 (TGNPFFTT). ATP contacts are provided by T165, F171, and D174.

This sequence belongs to the UMP kinase family. In terms of assembly, homohexamer.

The protein resides in the cytoplasm. The enzyme catalyses UMP + ATP = UDP + ADP. The protein operates within pyrimidine metabolism; CTP biosynthesis via de novo pathway; UDP from UMP (UMPK route): step 1/1. Its activity is regulated as follows. Allosterically activated by GTP. Inhibited by UTP. In terms of biological role, catalyzes the reversible phosphorylation of UMP to UDP. This chain is Uridylate kinase, found in Salmonella choleraesuis (strain SC-B67).